The following is a 311-amino-acid chain: Replicative helicase loader DnaI (311 aa).

An N-terminal domain (Nd) region spans residues methionine 1–isoleucine 136. Cysteine 67, cysteine 70, histidine 84, and cysteine 101 together coordinate Zn(2+). Positions serine 137 to proline 311 are C-terminal domain (Cd). Glycine 168–threonine 175 contacts ATP.

This sequence belongs to the DnaI family. In terms of assembly, the DNA replisome assembles sequentially on oriC in this order; DnaA, DnaD, DnaB, DnaI-DnaC helicase. Monomer with a very minor amount of dimer in solution. Interacts with replicative helicase (from G.stearothermophilus, called DnaB); this interaction is disrupted by DnaD. Interacts with replicative helicase DnaC, forms a DnaC(6):DnaI(6) complex. Interacts with the helicase as 3 dimers. A stable complex with DnaG primase, DnaI(6):helicase(6):DnaG(3) fragment can be isolated; DnaI and DnaG do not contact each other (helicase and DnaG in this complex are derived from G.stearothermophilus). The cofactor is Zn(2+).

Its subcellular location is the cytoplasm. It catalyses the reaction ATP + H2O = ADP + phosphate + H(+). Its function is as follows. Helps load the DnaC replicative helicase onto single-stranded (ss)DNA and simulates the helicase activity; in the presence of DnaB more helicase activity is seen. Regulates DnaC helicase activity, at low concentrations stimulates the DNA helicase and ATPase activities of DnaC. Has no measurable ATPase activity after 1 hour incubation of 6 uM DnaI with or without DNA. Another group has found the protein has weak ATPase activity that is not stimulated by ssDNA. Whole protein binds forked DNA (but not ssDNA) weakly; ATP and ADPNP (probably 5'-adenylyl beta, gamma-imidodiphosphate) have no effect on DNA binding. DnaB, DnaD and DnaI may be required for a PriA-independent pathway of replication fork restart. This chain is Replicative helicase loader DnaI, found in Bacillus subtilis (strain 168).